The chain runs to 411 residues: 2,3-bisphosphoglycerate-independent phosphoglycerate mutase (411 aa).

It belongs to the BPG-independent phosphoglycerate mutase family. A-PGAM subfamily.

The enzyme catalyses (2R)-2-phosphoglycerate = (2R)-3-phosphoglycerate. The protein operates within carbohydrate degradation; glycolysis; pyruvate from D-glyceraldehyde 3-phosphate: step 3/5. Functionally, catalyzes the interconversion of 2-phosphoglycerate and 3-phosphoglycerate. This chain is 2,3-bisphosphoglycerate-independent phosphoglycerate mutase, found in Pyrobaculum islandicum (strain DSM 4184 / JCM 9189 / GEO3).